The sequence spans 1010 residues: Pre-mRNA-splicing factor cwc22 (1010 aa).

The segment covering 1–10 (MASADMSPSR) has biased composition (polar residues). The interval 1–166 (MASADMSPSR…RTPTPPPVAV (166 aa)) is disordered. Residues 18–28 (RSPSPRTQSPS) show a composition bias toward low complexity. Basic and acidic residues-rich tracts occupy residues 29 to 39 (PRDEDGSRSPG) and 65 to 78 (PRRD…DQPH). Residues 84–109 (RSPTPRSQSPSRRSVRSPSPRQGSPA) are compositionally biased toward low complexity. A compositionally biased stretch (basic and acidic residues) spans 142 to 158 (RHRDAGGDYRPVRKERT). An MIF4G domain is found at 222–405 (KKSVNGLVNK…EVLFQVRKDK (184 aa)). Residues 466–498 (GEASDDDEDDDDDDESESGSESEDEEQKALEIK) are disordered. Residues 468–491 (ASDDDEDDDDDDESESGSESEDEE) show a composition bias toward acidic residues. The region spanning 507–623 (NLRRTIYLSI…GWHVFSVIHL (117 aa)) is the MI domain. Positions 708–1010 (LPAPPADSDS…SPVAKRGRVD (303 aa)) are disordered. A compositionally biased stretch (low complexity) spans 718-732 (ESVSSYSSYSSYSSR). Positions 753–775 (PPRRGRGRSYSRTPSRSRSRSRS) are enriched in basic residues. Residues 776–787 (YSRSVSKSVSRS) are compositionally biased toward low complexity. Composition is skewed to basic residues over residues 834–846 (RRGR…RSRS) and 899–910 (RLRRGSYSRSRS). Residues 911–935 (RSPIPIRGNGPAGRDTGRAGPAPAR) are compositionally biased toward low complexity. A compositionally biased stretch (basic residues) spans 936–948 (GGRRNRSYSRSRT). Residues 961–973 (SRRVVSRSPSPVV) are compositionally biased toward low complexity. Over residues 976–1010 (NKRRRSYSSSRSRSRSSSRSRYRSRSPVAKRGRVD) the composition is skewed to basic residues.

The protein belongs to the CWC22 family. Associated with the spliceosome.

The protein localises to the cytoplasm. It localises to the nucleus. Its function is as follows. Involved in pre-mRNA splicing. This chain is Pre-mRNA-splicing factor cwc22 (msp-1), found in Neurospora crassa (strain ATCC 24698 / 74-OR23-1A / CBS 708.71 / DSM 1257 / FGSC 987).